The primary structure comprises 205 residues: Protein PYRAB00100 (205 aa).

Residues E7–R201 enclose the AMMECR1 domain.

The sequence is that of Protein PYRAB00100 from Pyrococcus abyssi (strain GE5 / Orsay).